Here is a 50-residue protein sequence, read N- to C-terminus: Insulin (50 aa).

3 disulfides stabilise this stretch: Cys7/Cys36, Cys19/Cys49, and Cys35/Cys40.

This sequence belongs to the insulin family. As to quaternary structure, heterodimer of a B chain and an A chain linked by two disulfide bonds.

Its subcellular location is the secreted. Its function is as follows. Insulin decreases blood glucose concentration. It increases cell permeability to monosaccharides, amino acids and fatty acids. It accelerates glycolysis, the pentose phosphate cycle, and glycogen synthesis in liver. This Katsuwonus pelamis (Skipjack tuna) protein is Insulin (ins).